A 930-amino-acid chain; its full sequence is Endoplasmic reticulum aminopeptidase 1 (930 aa).

Residues 1-2 (MP) lie on the Cytoplasmic side of the membrane. The chain crosses the membrane as a helical; Signal-anchor for type II membrane protein span at residues 3-23 (SLLPLVLTFLSVSSPSWCQNS). The Lumenal segment spans residues 24 to 930 (DIESLKASNG…WLQKEKPELL (907 aa)). Residues asparagine 59 and asparagine 143 are each glycosylated (N-linked (GlcNAc...) asparagine). Substrate is bound by residues glutamate 172 and 306 to 310 (GAMEN). Histidine 342 contacts Zn(2+). Glutamate 343 is an active-site residue. The Zn(2+) site is built by histidine 346 and glutamate 365. A disulfide bond links cysteine 393 and cysteine 432. 2 N-linked (GlcNAc...) asparagine glycosylation sites follow: asparagine 403 and asparagine 655. A disulfide bridge connects residues cysteine 725 and cysteine 732. Asparagine 749 and asparagine 890 each carry an N-linked (GlcNAc...) asparagine glycan.

Belongs to the peptidase M1 family. In terms of assembly, monomer. May also exist as a heterodimer; with ERAP2. Interacts with RBMX. It depends on Zn(2+) as a cofactor. N-glycosylated.

It localises to the endoplasmic reticulum membrane. Functionally, aminopeptidase that plays a central role in peptide trimming, a step required for the generation of most HLA class I-binding peptides. Peptide trimming is essential to customize longer precursor peptides to fit them to the correct length required for presentation on MHC class I molecules. Strongly prefers substrates 9-16 residues long. Rapidly degrades 13-mer to a 9-mer and then stops. Preferentially hydrolyzes the residue Leu and peptides with a hydrophobic C-terminus, while it has weak activity toward peptides with charged C-terminus. May play a role in the inactivation of peptide hormones. May be involved in the regulation of blood pressure through the inactivation of angiotensin II and/or the generation of bradykinin in the kidney. The sequence is that of Endoplasmic reticulum aminopeptidase 1 (Erap1) from Mus musculus (Mouse).